The chain runs to 447 residues: ATP-dependent protease ATPase subunit HslU (447 aa).

Residues isoleucine 17 and 59–64 (GVGKTE) contribute to the ATP site. Residues 136 to 160 (PPARGGFQGEPTAEEKPTEKKESAT) form a disordered region. Residues 148–159 (AEEKPTEKKESA) show a composition bias toward basic and acidic residues. ATP is bound by residues aspartate 260, glutamate 325, and arginine 397.

The protein belongs to the ClpX chaperone family. HslU subfamily. In terms of assembly, a double ring-shaped homohexamer of HslV is capped on each side by a ring-shaped HslU homohexamer. The assembly of the HslU/HslV complex is dependent on binding of ATP.

The protein resides in the cytoplasm. ATPase subunit of a proteasome-like degradation complex; this subunit has chaperone activity. The binding of ATP and its subsequent hydrolysis by HslU are essential for unfolding of protein substrates subsequently hydrolyzed by HslV. HslU recognizes the N-terminal part of its protein substrates and unfolds these before they are guided to HslV for hydrolysis. The sequence is that of ATP-dependent protease ATPase subunit HslU from Coxiella burnetii (strain RSA 331 / Henzerling II).